Consider the following 103-residue polypeptide: Large ribosomal subunit protein eL14 (103 aa).

Belongs to the eukaryotic ribosomal protein eL14 family.

The sequence is that of Large ribosomal subunit protein eL14 from Pyrobaculum calidifontis (strain DSM 21063 / JCM 11548 / VA1).